The following is a 431-amino-acid chain: Gamma-glutamyl phosphate reductase (431 aa).

It belongs to the gamma-glutamyl phosphate reductase family.

The protein resides in the cytoplasm. It catalyses the reaction L-glutamate 5-semialdehyde + phosphate + NADP(+) = L-glutamyl 5-phosphate + NADPH + H(+). It participates in amino-acid biosynthesis; L-proline biosynthesis; L-glutamate 5-semialdehyde from L-glutamate: step 2/2. Its function is as follows. Catalyzes the NADPH-dependent reduction of L-glutamate 5-phosphate into L-glutamate 5-semialdehyde and phosphate. The product spontaneously undergoes cyclization to form 1-pyrroline-5-carboxylate. In Trichodesmium erythraeum (strain IMS101), this protein is Gamma-glutamyl phosphate reductase.